The primary structure comprises 239 residues: Orotidine 5'-phosphate decarboxylase (239 aa).

Substrate-binding positions include Asp-10, Lys-32, 59–68 (DLKLHDIPNT), Thr-122, Arg-184, Gln-193, Gly-213, and Arg-214. The Proton donor role is filled by Lys-61.

Belongs to the OMP decarboxylase family. Type 1 subfamily. As to quaternary structure, homodimer.

The enzyme catalyses orotidine 5'-phosphate + H(+) = UMP + CO2. The protein operates within pyrimidine metabolism; UMP biosynthesis via de novo pathway; UMP from orotate: step 2/2. Catalyzes the decarboxylation of orotidine 5'-monophosphate (OMP) to uridine 5'-monophosphate (UMP). This is Orotidine 5'-phosphate decarboxylase from Shouchella clausii (strain KSM-K16) (Alkalihalobacillus clausii).